We begin with the raw amino-acid sequence, 232 residues long: Orotidine 5'-phosphate decarboxylase (232 aa).

Substrate-binding positions include D13, K35, 62 to 71 (DLKFHDIPNT), T121, R182, Q191, G211, and R212. The active-site Proton donor is K64.

The protein belongs to the OMP decarboxylase family. Type 1 subfamily. As to quaternary structure, homodimer.

It carries out the reaction orotidine 5'-phosphate + H(+) = UMP + CO2. The protein operates within pyrimidine metabolism; UMP biosynthesis via de novo pathway; UMP from orotate: step 2/2. Functionally, catalyzes the decarboxylation of orotidine 5'-monophosphate (OMP) to uridine 5'-monophosphate (UMP). This is Orotidine 5'-phosphate decarboxylase from Acinetobacter baumannii (strain ACICU).